The sequence spans 892 residues: Ataxin-7 (892 aa).

Basic and acidic residues predominate over residues 1 to 15; the sequence is MSERAADDVRGEPRR. Disordered stretches follow at residues 1–74 and 195–247; these read MSER…SAAA and SKGG…SRVP. Residues 16–38 show a composition bias toward low complexity; that stretch reads AAAAAGGAAAAAARQQQQQQQQQ. A compositionally biased stretch (pro residues) spans 39–55; sequence QPPPPQPQRQQHPPPPP. Low complexity predominate over residues 195 to 222; it reads SKGGSASGSNRSSSGGVLSASSSSSKLL. A Glycyl lysine isopeptide (Lys-Gly) (interchain with G-Cter in SUMO); alternate cross-link involves residue Lys-257. Lys-257 participates in a covalent cross-link: Glycyl lysine isopeptide (Lys-Gly) (interchain with G-Cter in SUMO2); alternate. 4 disordered regions span residues 298–328, 389–505, 616–730, and 818–892; these read PTLP…NSNN, HKNK…ESVE, KSVP…SSHS, and SHGS…KARP. Basic and acidic residues-rich tracts occupy residues 318–327 and 389–403; these read LEKKPEDNSN and HKNK…RHPD. The 68-residue stretch at 334 to 401 folds into the SCA7 domain; that stretch reads KRLSEREFDP…KTREKELIRH (68 aa). 3 stretches are compositionally biased toward pro residues: residues 405-419, 448-458, and 468-483; these read QQPP…PAPP, HTPSLPRPPGC, and IDPP…PLPA. A compositionally biased stretch (acidic residues) spans 493–502; it reads EEGEGDDKEE. Polar residues predominate over residues 616–629; the sequence is KSVPAHGTTLNAQP. Positions 640-669 are enriched in low complexity; that stretch reads SMQSRQVSSSSSSPSTPSGLSSVPSSPMSR. Over residues 670 to 680 the composition is skewed to basic residues; the sequence is KPQKLKSSKSL. Polar residues predominate over residues 685–695; that stretch reads SSGNSTNCQNA. Composition is skewed to low complexity over residues 716–730 and 840–851; these read HSSS…SSHS and SPSSSSINNSSS.

The protein belongs to the ataxin-7 family. In terms of assembly, component of the SAGA transcription coactivator-HAT complex, at least composed of SUPT3H, GCN5L2, TAF5L, TAF6L, SUPT7L, TADA3L, TAD1L, TAF10, TAF12, TRRAP, TAF9 and ATXN7. The STAGA core complex is associated with a subcomplex required for histone deubiquitination composed of ATXN7L3, ENY2 and USP22. Interacts with SORBS1, PSMC1 and CRX. Interacts with TRRAP, GCN5L2 and TAF10. Interacts with alpha tubulin. In terms of processing, proteolytically cleaved by caspase-7 (CASP7). The cleavage may be involved in SCA7 degeneration: the isoform fragments may exert distinct toxic influences that could contribute to selective neurodegeneration. Post-translationally, sumoylation decreases the aggregation propensity and cellular toxicity of forms with an expanded poly-Gln region but has no effect on subcellular location or interaction with components of the STAGA complex. In terms of tissue distribution, isoform a is expressed in CNS, but is expressed predominantly in the peripherical tissues. Isoform b is expressed in CNS. Also highly expressed in the frontal lobe, skeletal muscle and spinal cord and is expressed at a lower level in the lung, lymphoblast and intestine.

The protein resides in the nucleus. It is found in the nucleolus. The protein localises to the nucleus matrix. Its subcellular location is the cytoplasm. It localises to the cytoskeleton. In terms of biological role, acts as a component of the SAGA (aka STAGA) transcription coactivator-HAT complex. Mediates the interaction of SAGA complex with the CRX and is involved in CRX-dependent gene activation. Probably involved in tethering the deubiquitination module within the SAGA complex. Necessary for microtubule cytoskeleton stabilization. Involved in neurodegeneration. In Homo sapiens (Human), this protein is Ataxin-7 (ATXN7).